A 204-amino-acid polypeptide reads, in one-letter code: Pro-hevein (204 aa).

The first 17 residues, 1 to 17 (MNIFIVVLLCLTGVAIA), serve as a signal peptide directing secretion. In terms of domain architecture, Chitin-binding type-1 spans 18-60 (EQCGRQAGGKLCPNNLCCSQWGWCGSTDEYCSPDHNCQSNCKD). 4 disulfides stabilise this stretch: C20–C35, C29–C41, C34–C48, and C54–C58. Positions 61 to 66 (SGEGVG) are excised as a propeptide. The 122-residue stretch at 68–189 (GSASNVLATY…VNYQFVDCGD (122 aa)) folds into the Barwin domain. 3 disulfide bridges follow: C96–C128, C117–C151, and C131–C187.

Post-translationally, proteolytically processed to yield the two chains of the mature protein. As to expression, laticifer.

Functionally, N-acetyl-D-glucosamine / N-acetyl-D-neuraminic acid binding lectin. Can inhibit fungal growth. In Hevea brasiliensis (Para rubber tree), this protein is Pro-hevein (HEV1).